The following is a 696-amino-acid chain: Spermatogenesis-associated protein 21 (696 aa).

Disordered regions lie at residues 1–301 (MDNR…AAGT) and 329–386 (LKAR…SVPT). Basic and acidic residues predominate over residues 67-86 (KGPRYRDTFKEGPSELRTQE). Polar residues predominate over residues 96–116 (KQSSWVPQEGSQELQAGQDQS). Residues 195–209 (GDKRPKEADVPHIRP) show a composition bias toward basic and acidic residues. Positions 223–235 (DSSQEAMPPTSTV) are enriched in polar residues. The span at 275–287 (EVRDIGERREPDR) shows a compositional bias: basic and acidic residues. Composition is skewed to low complexity over residues 288–297 (VQQQPQKPVV) and 339–366 (SPRT…SGPS). The stretch at 424 to 451 (EPEEQSLQKLYQNREKSEEQLTLKQEEA) forms a coiled coil. The 36-residue stretch at 481–516 (VTPAQVEDALMSADVNGDGHVDFKDFLAVMTDTRRF) folds into the EF-hand domain. Positions 494, 496, 498, 500, and 505 each coordinate Ca(2+). A disordered region spans residues 646 to 696 (KPTNHYVQDQCTTPGLAPDIRSPFFQSRSQGNREHNSDSRKWPSSVPSRTH). The segment covering 676–686 (GNREHNSDSRK) has biased composition (basic and acidic residues).

Functionally, involved in the differentiation of haploid spermatids. This Macaca fascicularis (Crab-eating macaque) protein is Spermatogenesis-associated protein 21 (SPATA21).